Consider the following 380-residue polypeptide: cAMP-dependent protein kinase type I-alpha regulatory subunit (380 aa).

Met1 carries the post-translational modification N-acetylmethionine. N-acetylalanine; in cAMP-dependent protein kinase type I-alpha regulatory subunit, N-terminally processed is present on Ala2. The tract at residues Ala2–Val135 is dimerization and phosphorylation. Ser3, Ser76, and Ser82 each carry phosphoserine. The interval Ile64 to Arg96 is disordered. The Pseudophosphorylation motif signature appears at Arg95–Ile99. Phosphoserine is present on Ser100. 3',5'-cyclic AMP is bound by residues Leu136–Ser253, Glu201, Arg210, Ile254–Val380, Glu325, and Arg334. Ser257 carries the phosphoserine modification.

This sequence belongs to the cAMP-dependent kinase regulatory chain family. The inactive holoenzyme is composed of two regulatory chains and two catalytic chains. Activation by cAMP releases the two active catalytic monomers and the regulatory dimer. Interacts with PRKACA and PRKACB. PRKAR1A also interacts with RFC2; the complex may be involved in cell survival. Interacts with AKAP4. Interacts with RARA; the interaction occurs in the presence of cAMP or FSH and regulates RARA transcriptional activity. Interacts with the phosphorylated form of PJA2. Interacts with CBFA2T3. Interacts with PRKX; regulates this cAMP-dependent protein kinase. Interacts with smAKAP; this interaction may target PRKAR1A to the plasma membrane. Interacts with AICDA. Post-translationally, the pseudophosphorylation site binds to the substrate-binding region of the catalytic chain, resulting in the inhibition of its activity. In terms of tissue distribution, four types of regulatory chains are found: I-alpha, I-beta, II-alpha, and II-beta. Their expression varies among tissues and is in some cases constitutive and in others inducible.

The protein localises to the cell membrane. Regulatory subunit of the cAMP-dependent protein kinases involved in cAMP signaling in cells. This chain is cAMP-dependent protein kinase type I-alpha regulatory subunit (PRKAR1A), found in Sus scrofa (Pig).